Here is a 185-residue protein sequence, read N- to C-terminus: Ribosome-recycling factor (185 aa).

Belongs to the RRF family.

It localises to the cytoplasm. In terms of biological role, responsible for the release of ribosomes from messenger RNA at the termination of protein biosynthesis. May increase the efficiency of translation by recycling ribosomes from one round of translation to another. This Buchnera aphidicola subsp. Acyrthosiphon pisum (strain APS) (Acyrthosiphon pisum symbiotic bacterium) protein is Ribosome-recycling factor.